The following is a 140-amino-acid chain: uncharacterized protein (140 aa).

2 helical membrane passes run 33-53 and 59-79; these read LLYV…KYYF and SLLF…FMGF. Positions 89–104 are enriched in basic and acidic residues; it reads EAEPDYRKKQESKNQD. A disordered region spans residues 89-140; that stretch reads EAEPDYRKKQESKNQDFLKSQSNEPLEYASSSAVELEKEKNTREGLTILESS. Over residues 105–121 the composition is skewed to polar residues; it reads FLKSQSNEPLEYASSSA.

It localises to the membrane. This is an uncharacterized protein from Schizosaccharomyces pombe (strain 972 / ATCC 24843) (Fission yeast).